We begin with the raw amino-acid sequence, 86 residues long: Large ribosomal subunit protein uL23 (86 aa).

This sequence belongs to the universal ribosomal protein uL23 family. As to quaternary structure, part of the 50S ribosomal subunit. Contacts protein L29.

In terms of biological role, binds to 23S rRNA. One of the proteins that surrounds the polypeptide exit tunnel on the outside of the ribosome. The sequence is that of Large ribosomal subunit protein uL23 from Thermococcus onnurineus (strain NA1).